Consider the following 286-residue polypeptide: Penicillin-insensitive murein endopeptidase (286 aa).

Residues 1–22 (MNKILLKTTIIFTALFSLNVVA) form the signal peptide. His117, His120, Asp127, Asp152, and His218 together coordinate Zn(2+).

Belongs to the peptidase M74 family. The cofactor is Zn(2+).

The protein localises to the periplasm. Its function is as follows. Murein endopeptidase that cleaves the D-alanyl-meso-2,6-diamino-pimelyl amide bond that connects peptidoglycan strands. Likely plays a role in the removal of murein from the sacculus. In Haemophilus influenzae (strain ATCC 51907 / DSM 11121 / KW20 / Rd), this protein is Penicillin-insensitive murein endopeptidase (mepA).